The sequence spans 304 residues: Glycine--tRNA ligase alpha subunit (304 aa).

The protein belongs to the class-II aminoacyl-tRNA synthetase family. As to quaternary structure, tetramer of two alpha and two beta subunits.

It localises to the cytoplasm. The catalysed reaction is tRNA(Gly) + glycine + ATP = glycyl-tRNA(Gly) + AMP + diphosphate. The polypeptide is Glycine--tRNA ligase alpha subunit (Photorhabdus laumondii subsp. laumondii (strain DSM 15139 / CIP 105565 / TT01) (Photorhabdus luminescens subsp. laumondii)).